We begin with the raw amino-acid sequence, 376 residues long: Guanine nucleotide-binding protein G(s) subunit alpha (376 aa).

Gly2 carries N-palmitoyl glycine lipidation. Cys3 is lipidated: S-palmitoyl cysteine. Residues 36–376 (GTHRLLLLGA…RMHLRQYELL (341 aa)) form the G-alpha domain. Residues 39 to 52 (RLLLLGAGESGKST) are G1 motif. Residues 44-51 (GAGESGKS), 180-186 (LRCRVLT), 205-209 (DVGGQ), 274-277 (NKQD), and Ala348 contribute to the GTP site. Residues Ser51 and Thr186 each coordinate Mg(2+). The segment at 178-186 (DILRCRVLT) is G2 motif. The interval 201 to 210 (FHMFDVGGQR) is G3 motif. Positions 270–277 (ILFLNKQD) are G4 motif. The tract at residues 346–351 (TCAVDT) is G5 motif.

The protein belongs to the G-alpha family. G(s) subfamily. As to quaternary structure, g proteins are composed of 3 units; alpha, beta and gamma. The alpha chain contains the guanine nucleotide binding site.

Its function is as follows. Guanine nucleotide-binding proteins (G proteins) are involved as modulators or transducers in various transmembrane signaling systems. The G(s) protein is involved in hormonal regulation of adenylate cyclase: it activates the cyclase in response to beta-adrenergic stimuli. This chain is Guanine nucleotide-binding protein G(s) subunit alpha, found in Lymnaea stagnalis (Great pond snail).